We begin with the raw amino-acid sequence, 132 residues long: MAKEYSRTQRIGDQMQRELAELIRREVKDPRVGLVTITAVDVSRDLGHAKVFITVMGEETPDAVQQSLKALNSAASFLRLHLGRSMQLRSVPQLHFHFDESVSRGVHLSALIERAVAEDRLHKDADESGTKE.

Belongs to the RbfA family. Monomer. Binds 30S ribosomal subunits, but not 50S ribosomal subunits or 70S ribosomes.

The protein resides in the cytoplasm. Its function is as follows. One of several proteins that assist in the late maturation steps of the functional core of the 30S ribosomal subunit. Associates with free 30S ribosomal subunits (but not with 30S subunits that are part of 70S ribosomes or polysomes). Required for efficient processing of 16S rRNA. May interact with the 5'-terminal helix region of 16S rRNA. The protein is Ribosome-binding factor A of Pseudomonas putida (strain GB-1).